We begin with the raw amino-acid sequence, 300 residues long: 4-hydroxy-tetrahydrodipicolinate synthase (300 aa).

Thr-45 is a binding site for pyruvate. Tyr-140 functions as the Proton donor/acceptor in the catalytic mechanism. Catalysis depends on Lys-169, which acts as the Schiff-base intermediate with substrate. Ile-210 provides a ligand contact to pyruvate.

The protein belongs to the DapA family. Homotetramer; dimer of dimers.

It is found in the cytoplasm. It catalyses the reaction L-aspartate 4-semialdehyde + pyruvate = (2S,4S)-4-hydroxy-2,3,4,5-tetrahydrodipicolinate + H2O + H(+). It participates in amino-acid biosynthesis; L-lysine biosynthesis via DAP pathway; (S)-tetrahydrodipicolinate from L-aspartate: step 3/4. Functionally, catalyzes the condensation of (S)-aspartate-beta-semialdehyde [(S)-ASA] and pyruvate to 4-hydroxy-tetrahydrodipicolinate (HTPA). The sequence is that of 4-hydroxy-tetrahydrodipicolinate synthase from Helicobacter pylori (strain P12).